The following is a 269-amino-acid chain: Protein TORNADO 2 (269 aa).

Residues 1-10 lie on the Cytoplasmic side of the membrane; it reads MPLSNNVIGC. A helical membrane pass occupies residues 11-31; that stretch reads INFITVLLSIPVIGAGIWLAI. Over 32-44 the chain is Extracellular; it reads GTVNSCVKLLQWP. The helical transmembrane segment at 45-65 threads the bilayer; that stretch reads VIILGVLILLVGLAGFIGGFW. Residues 66–71 lie on the Cytoplasmic side of the membrane; the sequence is RITWLL. The chain crosses the membrane as a helical span at residues 72–92; that stretch reads VVYLIAMLILIVLLGCLVGFI. The Extracellular portion of the chain corresponds to 93 to 231; it reads YMVTIRGSGH…NIKVDWLKAD (139 aa). N-linked (GlcNAc...) asparagine glycosylation occurs at Asn-200. Residues 232–252 form a helical membrane-spanning segment; it reads IFLLLALIGLIIVYIIGCCAF. The Cytoplasmic portion of the chain corresponds to 253 to 269; that stretch reads RNAETEDIFRKYKQGYT.

This sequence belongs to the tetraspanin (TM4SF) family. Expressed in seedlings, roots, leaves, stems, apex, siliques and flowers. Present in ovules, prominently in nucellus and integuments.

Its subcellular location is the membrane. Functionally, involved in the basipetal transport of auxin (IAA) that modulates growth and organs organization, as well as cell differentiation. Regulates shoot apical meristem (SAM) organization in the peripheral zone. Required for initial meristematic divisions in the epidermal/lateral root cap leading to the formation of epidermal cells and a clone of lateral root cap cells, as well as for the maintenance of the radial pattern of cell specification in the root, thus regulating the distinction between the lateral root cap and epidermis. Together with WIH peptides, promotes megasporogenesis. The chain is Protein TORNADO 2 (TRN2) from Arabidopsis thaliana (Mouse-ear cress).